A 197-amino-acid polypeptide reads, in one-letter code: Negative modulator of initiation of replication (197 aa).

The protein belongs to the SeqA family. Homodimer. Polymerizes to form helical filaments.

It is found in the cytoplasm. Negative regulator of replication initiation, which contributes to regulation of DNA replication and ensures that replication initiation occurs exactly once per chromosome per cell cycle. Binds to pairs of hemimethylated GATC sequences in the oriC region, thus preventing assembly of replication proteins and re-initiation at newly replicated origins. Repression is relieved when the region becomes fully methylated. In Pseudoalteromonas translucida (strain TAC 125), this protein is Negative modulator of initiation of replication.